Reading from the N-terminus, the 60-residue chain is Mastoparan-B (60 aa).

Positions 1–27 (MKNTILILFTAFIALLGFFGMSAEALA) are cleaved as a signal peptide. 4 AXPX repeats span residues 27–30 (ADPL), 31–34 (AEPL), 35–38 (ADPN), and 41–44 (ADPE). The propeptide occupies 28–45 (DPLAEPLADPNAEADPEA). At Leu-59 the chain carries Leucine amide.

It belongs to the MCD family. Mastoparan subfamily. Expressed by the venom gland.

Its subcellular location is the secreted. It localises to the target cell membrane. Functionally, antimicrobial and mast cell degranulating peptide. Has broad spectrum antibacterial activity against both Gram-positive (S.aureus MIC=96-128 ug/ml, S.xylosus MIC=2 ug/ml, S.alactolyticus MIC=32 ug/ml, and S.choleraesuis MIC=32 ug/ml) and Gram-negative bacteria (C.koseri MIC=6 ug/ml, E.coli MIC=3-16 ug/ml, K.pneumoniae MIC=128 ug/ml, P.aerugiosa MIC=128 ug/ml, S.typhimurium MIC=64 ug/ml, V.parahamelytics MIC=32 ug/ml, and S.enterica), as well as on fungi (C.albicans, C.glabrata, and C.neoformans). Does not show antimicrobial activity against S.mutans. Affects membrane permeability of E.coli. Also acts as a mast cell degranulating peptide, that causes liberation of histamine from rat peritoneal mast cells. Its mast cell degranulation activity may be related to the activation of G-protein coupled receptors in mast cells as well as interaction with other proteins located in cell endosomal membranes in the mast cells. Whether this peptide shows hemolytic activities is controversial, as Lin et al., 2011 and Ho et al., 1991 found a hemolytic activity on sheep, chicken and human erythrocytes, whereas Kim et al., 2016 found no hemolytic activity on human erythrocytes. In vivo, induces edema in the rat paw. This chain is Mastoparan-B, found in Vespa basalis (Hornet).